A 218-amino-acid chain; its full sequence is Lipoprotein-releasing system ATP-binding protein LolD (218 aa).

The ABC transporter domain occupies 2–218 (IKLEGITKSF…HMVDGTIKKD (217 aa)). 34 to 41 (GPSGAGKT) contributes to the ATP binding site.

The protein belongs to the ABC transporter superfamily. Lipoprotein translocase (TC 3.A.1.125) family. The complex is composed of two ATP-binding proteins (LolD) and two transmembrane proteins (LolC and LolE).

Its subcellular location is the cell inner membrane. In terms of biological role, part of the ABC transporter complex LolCDE involved in the translocation of mature outer membrane-directed lipoproteins, from the inner membrane to the periplasmic chaperone, LolA. Responsible for the formation of the LolA-lipoprotein complex in an ATP-dependent manner. The polypeptide is Lipoprotein-releasing system ATP-binding protein LolD (Bacteroides thetaiotaomicron (strain ATCC 29148 / DSM 2079 / JCM 5827 / CCUG 10774 / NCTC 10582 / VPI-5482 / E50)).